Consider the following 247-residue polypeptide: 2,3-bisphosphoglycerate-dependent phosphoglycerate mutase (247 aa).

Substrate-binding positions include 8–15 (RHGESTWN), 21–22 (TG), Arg60, 87–90 (ERHY), Lys98, 114–115 (RR), and 183–184 (GN). The Tele-phosphohistidine intermediate role is filled by His9. Glu87 acts as the Proton donor/acceptor in catalysis.

Belongs to the phosphoglycerate mutase family. BPG-dependent PGAM subfamily. In terms of assembly, homodimer.

It carries out the reaction (2R)-2-phosphoglycerate = (2R)-3-phosphoglycerate. It functions in the pathway carbohydrate degradation; glycolysis; pyruvate from D-glyceraldehyde 3-phosphate: step 3/5. Catalyzes the interconversion of 2-phosphoglycerate and 3-phosphoglycerate. The protein is 2,3-bisphosphoglycerate-dependent phosphoglycerate mutase of Delftia acidovorans (strain DSM 14801 / SPH-1).